We begin with the raw amino-acid sequence, 389 residues long: MINYVTAGESHGPQLTGVLTGIPAGLQLDIDAINTGLAARQGGFGRGNRQQIEHDTVQIIGGVRHGVTLGSPIALTIMNRDHAHWAAIMDPVSPATATNTLRQVTRPRPGHADLVGGMKYGHRDLRNVLERSSARETAMRVAIGQICKQLLAQLDIHLVGYVQQIGPKQVTADLTLSVDQLQAQIAQNDLRLPDAALVPEIHELITATKKAGDTLGGVIRVVAENVPAGLGSYTNWDTKLDGQLAAAVMGVNAMKGVEIGDGFAAASHYGSQVMDEISWDEHAGWSRLTNHLGGFEGGMTNGMPIVVKAAMKPIPTLYKPLQSVDIATKVSQKASVERSDTTAIVPASIVVESVVAIELTRALTATFDGSNLARLQQTVTAYREELRQY.

NADP(+) contacts are provided by arginine 40 and arginine 46. Residues 131–133 (RSS), 252–253 (NA), glycine 297, 312–316 (KPIPT), and arginine 338 contribute to the FMN site.

This sequence belongs to the chorismate synthase family. In terms of assembly, homotetramer. FMNH2 serves as cofactor.

It catalyses the reaction 5-O-(1-carboxyvinyl)-3-phosphoshikimate = chorismate + phosphate. The protein operates within metabolic intermediate biosynthesis; chorismate biosynthesis; chorismate from D-erythrose 4-phosphate and phosphoenolpyruvate: step 7/7. In terms of biological role, catalyzes the anti-1,4-elimination of the C-3 phosphate and the C-6 proR hydrogen from 5-enolpyruvylshikimate-3-phosphate (EPSP) to yield chorismate, which is the branch point compound that serves as the starting substrate for the three terminal pathways of aromatic amino acid biosynthesis. This reaction introduces a second double bond into the aromatic ring system. This Lactiplantibacillus plantarum (strain ATCC BAA-793 / NCIMB 8826 / WCFS1) (Lactobacillus plantarum) protein is Chorismate synthase.